The following is a 185-amino-acid chain: Comitin (185 aa).

A Bulb-type lectin domain is found at 1-123 (MELLRQGEHL…YKQILYSSKP (123 aa)). The interval 138–185 (SGHPQSAYPPQQPGYGYPAQPGYPPQPGYPPQHGYPPQHGYPQQPGYY) is disordered. Over residues 141–157 (PQSAYPPQQPGYGYPAQ) the composition is skewed to low complexity. 5 repeat units span residues 153-158 (GYPAQP), 159-164 (GYPPQP), 165-170 (GYPPQH), 171-176 (GYPPQH), and 177-182 (GYPQQP). Positions 153–182 (GYPAQPGYPPQPGYPPQHGYPPQHGYPQQP) are 5 X 6 AA tandem repeats of G-Y-P-X-Q-[PH]. Residues 158–171 (PGYPPQPGYPPQHG) are compositionally biased toward pro residues. The segment covering 172–185 (YPPQHGYPQQPGYY) has biased composition (low complexity).

As to quaternary structure, homodimer in solution. The N-terminus is blocked.

Its subcellular location is the golgi apparatus membrane. It is found in the endomembrane system. The protein localises to the cytoplasm. It localises to the cytoskeleton. May have a role in cell motility. It has high affinity for both G-actin and F-actin. Binds to vesicle membranes via mannose residues and, by way of its interaction with actin, links these membranes to the cytoskeleton. The chain is Comitin (comA) from Dictyostelium discoideum (Social amoeba).